The primary structure comprises 362 residues: dTDP-glucose 4,6-dehydratase (362 aa).

Residues 11–12 (FI), 32–35 (DKLT), 58–59 (DI), 80–84 (LAAES), and T99 each bind NAD(+). S84 serves as a coordination point for substrate. Position 133 (T133) interacts with substrate. D134 serves as the catalytic Proton donor. Active-site proton acceptor residues include E135 and Y167. 167–171 (YSASK) provides a ligand contact to NAD(+). N196 serves as a coordination point for substrate. N197 serves as a coordination point for NAD(+). Substrate-binding positions include 206–207 (KL), 222–224 (PVY), R231, N266, and 300–304 (DRPGH).

It belongs to the NAD(P)-dependent epimerase/dehydratase family. dTDP-glucose dehydratase subfamily. NAD(+) serves as cofactor.

The catalysed reaction is dTDP-alpha-D-glucose = dTDP-4-dehydro-6-deoxy-alpha-D-glucose + H2O. The protein operates within bacterial outer membrane biogenesis; LPS O-antigen biosynthesis. Its function is as follows. Catalyzes the dehydration of dTDP-D-glucose to form dTDP-4-dehydro-6-deoxy-D-glucose via a three-step process involving oxidation, dehydration and reduction. This reaction is a step in the biosynthesis of D-fucofuranose, a component of E.coli O52 O antigen. This chain is dTDP-glucose 4,6-dehydratase (rmlB), found in Escherichia coli.